Reading from the N-terminus, the 354-residue chain is Protein RecA (354 aa).

65–72 (GPESSGKT) serves as a coordination point for ATP.

This sequence belongs to the RecA family.

The protein localises to the cytoplasm. In terms of biological role, can catalyze the hydrolysis of ATP in the presence of single-stranded DNA, the ATP-dependent uptake of single-stranded DNA by duplex DNA, and the ATP-dependent hybridization of homologous single-stranded DNAs. It interacts with LexA causing its activation and leading to its autocatalytic cleavage. This Pseudomonas syringae pv. syringae (strain B728a) protein is Protein RecA.